The sequence spans 347 residues: Protein RecA (347 aa).

66–73 (GPESSGKT) is an ATP binding site.

It belongs to the RecA family.

The protein localises to the cytoplasm. Functionally, can catalyze the hydrolysis of ATP in the presence of single-stranded DNA, the ATP-dependent uptake of single-stranded DNA by duplex DNA, and the ATP-dependent hybridization of homologous single-stranded DNAs. It interacts with LexA causing its activation and leading to its autocatalytic cleavage. The polypeptide is Protein RecA (Allochromatium vinosum (Chromatium vinosum)).